Reading from the N-terminus, the 390-residue chain is Na(+)/H(+) antiporter NhaA (390 aa).

Helical transmembrane passes span Phe13 to Ile33, Leu61 to Leu81, Leu99 to Ile119, Gly129 to Gly149, Val158 to Phe178, Gly181 to Leu201, Phe209 to His229, Ala259 to Val279, Ile297 to Val317, Trp330 to Val350, and Ile367 to Ala387.

The protein belongs to the NhaA Na(+)/H(+) (TC 2.A.33) antiporter family.

The protein localises to the cell inner membrane. The catalysed reaction is Na(+)(in) + 2 H(+)(out) = Na(+)(out) + 2 H(+)(in). Na(+)/H(+) antiporter that extrudes sodium in exchange for external protons. This is Na(+)/H(+) antiporter NhaA from Pelagibacter ubique (strain HTCC1062).